The following is a 254-amino-acid chain: D-aminoacyl-tRNA deacylase (254 aa).

The tract at residues 61–82 is disordered; that stretch reads KPTLTVHTPGNLTDDNSHGGNP. Positions 65–74 are enriched in polar residues; it reads TVHTPGNLTD.

The protein belongs to the DtdA deacylase family. In terms of assembly, monomer. Zn(2+) is required as a cofactor.

It carries out the reaction a D-aminoacyl-tRNA + H2O = a tRNA + a D-alpha-amino acid + H(+). The catalysed reaction is glycyl-tRNA(Ala) + H2O = tRNA(Ala) + glycine + H(+). D-aminoacyl-tRNA deacylase with broad substrate specificity. By recycling D-aminoacyl-tRNA to D-amino acids and free tRNA molecules, this enzyme counteracts the toxicity associated with the formation of D-aminoacyl-tRNA entities in vivo. This Methanococcus maripaludis (strain DSM 14266 / JCM 13030 / NBRC 101832 / S2 / LL) protein is D-aminoacyl-tRNA deacylase.